Reading from the N-terminus, the 443-residue chain is Elongation factor 1-alpha (443 aa).

The region spanning 5–228 (KTHINLVVIG…DTMQPPKRPY (224 aa)) is the tr-type G domain. Residues 14–21 (GHVDSGKS) are G1. Residue 14-21 (GHVDSGKS) participates in GTP binding. Residues 70–74 (GITID) are G2. The segment at 91–94 (DAPG) is G3. Residues 91–95 (DAPGH) and 153–156 (NKMD) each bind GTP. A G4 region spans residues 153-156 (NKMD). A G5 region spans residues 192–194 (SGF).

This sequence belongs to the TRAFAC class translation factor GTPase superfamily. Classic translation factor GTPase family. EF-Tu/EF-1A subfamily.

The protein localises to the cytoplasm. Its function is as follows. This protein promotes the GTP-dependent binding of aminoacyl-tRNA to the A-site of ribosomes during protein biosynthesis. The chain is Elongation factor 1-alpha (MEF-1) from Plasmodium falciparum (isolate K1 / Thailand).